We begin with the raw amino-acid sequence, 248 residues long: 5'-nucleotidase SurE (248 aa).

A divalent metal cation-binding residues include Asp8, Asp9, Ser39, and Asn91.

It belongs to the SurE nucleotidase family. Requires a divalent metal cation as cofactor.

It is found in the cytoplasm. It carries out the reaction a ribonucleoside 5'-phosphate + H2O = a ribonucleoside + phosphate. In terms of biological role, nucleotidase that shows phosphatase activity on nucleoside 5'-monophosphates. This chain is 5'-nucleotidase SurE, found in Neisseria meningitidis serogroup C (strain 053442).